The sequence spans 390 residues: GTPase Obg (390 aa).

In terms of domain architecture, Obg spans 1–159 (MKFVDEASIL…RDLMLELMLL (159 aa)). Residues 127-147 (NTRFKSSVNRTPRQKTMGTPG) form a disordered region. The span at 129 to 143 (RFKSSVNRTPRQKTM) shows a compositional bias: polar residues. Residues 160 to 333 (ADVGMLGMPN…LCWDVMTFII (174 aa)) enclose the OBG-type G domain. Residues 166 to 173 (GMPNAGKS), 191 to 195 (FTTLV), 213 to 216 (DIPG), 283 to 286 (NKID), and 314 to 316 (SAA) each bind GTP. 2 residues coordinate Mg(2+): serine 173 and threonine 193.

It belongs to the TRAFAC class OBG-HflX-like GTPase superfamily. OBG GTPase family. Monomer. Mg(2+) serves as cofactor.

The protein resides in the cytoplasm. Functionally, an essential GTPase which binds GTP, GDP and possibly (p)ppGpp with moderate affinity, with high nucleotide exchange rates and a fairly low GTP hydrolysis rate. Plays a role in control of the cell cycle, stress response, ribosome biogenesis and in those bacteria that undergo differentiation, in morphogenesis control. The protein is GTPase Obg of Citrobacter koseri (strain ATCC BAA-895 / CDC 4225-83 / SGSC4696).